A 218-amino-acid polypeptide reads, in one-letter code: Small ribosomal subunit protein uS3c (218 aa).

The region spanning 47–118 (IQKTIKISSG…KLNIAITRIA (72 aa)) is the KH type-2 domain.

The protein belongs to the universal ribosomal protein uS3 family. In terms of assembly, part of the 30S ribosomal subunit.

The protein resides in the plastid. It localises to the chloroplast. The chain is Small ribosomal subunit protein uS3c (rps3) from Lotus japonicus (Lotus corniculatus var. japonicus).